Reading from the N-terminus, the 56-residue chain is Large ribosomal subunit protein bL32 (56 aa).

The tract at residues Met1 to His37 is disordered. The segment covering Lys7 to Arg16 has biased composition (basic residues).

The protein belongs to the bacterial ribosomal protein bL32 family.

This Haemophilus ducreyi (strain 35000HP / ATCC 700724) protein is Large ribosomal subunit protein bL32.